Consider the following 213-residue polypeptide: MOB kinase activator-like 1 homolog A (213 aa).

Zn(2+) is bound by residues C77, C82, H159, and H164.

It belongs to the MOB1/phocein family.

The chain is MOB kinase activator-like 1 homolog A (mobA) from Dictyostelium discoideum (Social amoeba).